The primary structure comprises 453 residues: Ribosome biogenesis protein SSF2 (453 aa).

Residues 1–11 (MAKRRQKKRTH) are compositionally biased toward basic residues. 3 disordered regions span residues 1–22 (MAKRRQKKRTHAQITPEQERDI), 275–327 (KAKH…KAIK), and 373–453 (AKMR…SEVE). Residues 26–348 (MVIRVGQTSL…LVKIEDGICS (323 aa)) form the Brix domain. The segment covering 373–398 (AKMRLKEQRRKEQEENIAKKKAVKDA) has biased composition (basic and acidic residues). Basic residues predominate over residues 399-409 (KKQRKLERRKA). A compositionally biased stretch (acidic residues) spans 440–453 (VPEDLDSDLFSEVE).

As to quaternary structure, part of a complex that includes BRX1, RPF1, RPF2 and SSF1 or SSF2.

It localises to the nucleus. Its subcellular location is the nucleolus. Its function is as follows. Required for biogenesis of the 60S ribosomal subunit. The protein is Ribosome biogenesis protein SSF2 (SSF2) of Saccharomyces cerevisiae (strain ATCC 204508 / S288c) (Baker's yeast).